Here is a 389-residue protein sequence, read N- to C-terminus: Probable serine/threonine-protein kinase PBL24 (389 aa).

Positions 1–36 (MSCFLGPSTNNKSRENEGSSMAAPYEQQNLPRNDRR) are disordered. C3 carries S-palmitoyl cysteine lipidation. The region spanning 71–348 (FRQEFLIGEG…SDVVTALSFM (278 aa)) is the Protein kinase domain. ATP is bound by residues 77-85 (IGEGGFGRV) and K100. D198 (proton acceptor) is an active-site residue. Residues S202 and S232 each carry the phosphoserine modification. T238 is modified (phosphothreonine). Phosphotyrosine is present on Y246.

The protein belongs to the protein kinase superfamily. Ser/Thr protein kinase family.

The protein resides in the cell membrane. It catalyses the reaction L-seryl-[protein] + ATP = O-phospho-L-seryl-[protein] + ADP + H(+). The catalysed reaction is L-threonyl-[protein] + ATP = O-phospho-L-threonyl-[protein] + ADP + H(+). In terms of biological role, may be involved in plant defense signaling. In Arabidopsis thaliana (Mouse-ear cress), this protein is Probable serine/threonine-protein kinase PBL24.